The chain runs to 511 residues: MFIESFKVESPNVKYTENEIHSVYDYETTEVVHEKTVNGTYQWIVKPKTVKYDFKTDIRVPKLGVMLVGLGGNNGSTLTAGVIANKEGISWATKDKVQQANYFGSLTQASSIRVGSFNGEEIYAPFKSLLPMVNPDDVVFGGWDISDMNLADAMARARVLDIDLQKQLRPYMENIVPLPGIFDPDFIAANQGSRANHVIKGTKKEQVDHIIKDMREFKEKNKVDKVVVLWTANTERYSNVVVGMNDTMENLMESVDRDEAEISPSTLYAIACVLEGIPFINGSPQNTFVPGLIDMAIRNNVLIGGDDFKSGQTKMKSVLVDFLVGAGIKPTSIVSYNHLGNNDGMNLSAPQTFRSKEISKSNVVDDMVASNGILFEPGEHPDHVVVIKYVPYVADSKRAMDEYTSEIFMGGKNTIVMHNTCEDSLLAAPIILDLVLLAELSTRIQFKSEGEGKFHSFHPVATILSYLTKAPLVPPGTPVINALSKQRAMLENIMRACVGLAPENNMIMEFK.

NAD(+) is bound by residues glycine 71, glycine 72, asparagine 73, asparagine 74, aspartate 144, isoleucine 181, glutamine 191, arginine 194, threonine 231, alanine 232, asparagine 233, threonine 234, glycine 282, serine 283, aspartate 307, serine 310, asparagine 341, asparagine 342, aspartate 343, lysine 356, alanine 394, aspartate 395, aspartate 423, and serine 424.

The protein belongs to the myo-inositol 1-phosphate synthase family. In terms of assembly, homotrimer or homotetramer. Interacts with ATXR5 and ATXR6. NAD(+) is required as a cofactor. Expressed in siliques, leaves, roots, seed endosperm, but not in embryos. Highest expression in leaves, but restricted to vascular tissue in older leaves.

It localises to the cytoplasm. The protein localises to the cytosol. Its subcellular location is the nucleus. It carries out the reaction D-glucose 6-phosphate = 1D-myo-inositol 3-phosphate. The protein operates within polyol metabolism; myo-inositol biosynthesis; myo-inositol from D-glucose 6-phosphate: step 1/2. In terms of biological role, key enzyme in myo-inositol biosynthesis pathway that catalyzes the conversion of glucose 6-phosphate to 1-myo-inositol 1-phosphate in a NAD-dependent manner. Catalyzes the majority of myo-inositol synthesis required for plant growth and development. Acts as a repressor of programmed cell death and protects plant cells against cell death under high light intensity or long days. Controls its own transcription by inhibiting ATXR6 activity. Reduces the deposition of inhibitory histone marks on its own promoter. This is Inositol-3-phosphate synthase isozyme 1 (IPS1) from Arabidopsis thaliana (Mouse-ear cress).